The chain runs to 468 residues: Adenylyltransferase and sulfurtransferase MOCS3-1 (468 aa).

ATP-binding positions include G111, D132, N139 to R143, K156, and D200 to N201. Zn(2+) is bound by residues C241 and C244. C258 serves as the catalytic Glycyl thioester intermediate; for adenylyltransferase activity. Zn(2+)-binding residues include C316 and C319. The region spanning D371–P466 is the Rhodanese domain. C426 (cysteine persulfide intermediate; for sulfurtransferase activity) is an active-site residue.

This sequence in the N-terminal section; belongs to the HesA/MoeB/ThiF family. UBA4 subfamily. Zn(2+) is required as a cofactor.

Its subcellular location is the cytoplasm. It carries out the reaction [molybdopterin-synthase sulfur-carrier protein]-C-terminal Gly-Gly + ATP + H(+) = [molybdopterin-synthase sulfur-carrier protein]-C-terminal Gly-Gly-AMP + diphosphate. The catalysed reaction is [molybdopterin-synthase sulfur-carrier protein]-C-terminal Gly-Gly-AMP + S-sulfanyl-L-cysteinyl-[cysteine desulfurase] + AH2 = [molybdopterin-synthase sulfur-carrier protein]-C-terminal-Gly-aminoethanethioate + L-cysteinyl-[cysteine desulfurase] + A + AMP + 2 H(+). It functions in the pathway tRNA modification; 5-methoxycarbonylmethyl-2-thiouridine-tRNA biosynthesis. The protein operates within cofactor biosynthesis; molybdopterin biosynthesis. Plays a central role in 2-thiolation of mcm(5)S(2)U at tRNA wobble positions of cytosolic tRNA(Lys), tRNA(Glu) and tRNA(Gln). Also essential during biosynthesis of the molybdenum cofactor. Acts by mediating the C-terminal thiocarboxylation of sulfur carriers URM1 and MOCS2A. Its N-terminus first activates URM1 and MOCS2A as acyl-adenylates (-COAMP), then the persulfide sulfur on the catalytic cysteine is transferred to URM1 and MOCS2A to form thiocarboxylation (-COSH) of their C-terminus. The reaction probably involves hydrogen sulfide that is generated from the persulfide intermediate and that acts as a nucleophile towards URM1 and MOCS2A. Subsequently, a transient disulfide bond is formed. Does not use thiosulfate as sulfur donor; NFS1 probably acting as a sulfur donor for thiocarboxylation reactions. This is Adenylyltransferase and sulfurtransferase MOCS3-1 from Zea mays (Maize).